Consider the following 395-residue polypeptide: S-adenosylmethionine synthase (395 aa).

Residue His16 participates in ATP binding. Asp18 lines the Mg(2+) pocket. K(+) is bound at residue Glu44. Residues Glu57 and Gln100 each contribute to the L-methionine site. Positions 100 to 110 are flexible loop; sequence QSPDIAQGVDR. ATP is bound by residues 167–169, 233–234, Asp242, 248–249, Ala265, and Lys269; these read DAK, RF, and RK. Asp242 serves as a coordination point for L-methionine. Position 273 (Lys273) interacts with L-methionine.

This sequence belongs to the AdoMet synthase family. As to quaternary structure, homotetramer; dimer of dimers. Requires Mg(2+) as cofactor. K(+) serves as cofactor.

The protein localises to the cytoplasm. The enzyme catalyses L-methionine + ATP + H2O = S-adenosyl-L-methionine + phosphate + diphosphate. Its pathway is amino-acid biosynthesis; S-adenosyl-L-methionine biosynthesis; S-adenosyl-L-methionine from L-methionine: step 1/1. In terms of biological role, catalyzes the formation of S-adenosylmethionine (AdoMet) from methionine and ATP. The overall synthetic reaction is composed of two sequential steps, AdoMet formation and the subsequent tripolyphosphate hydrolysis which occurs prior to release of AdoMet from the enzyme. The protein is S-adenosylmethionine synthase of Burkholderia vietnamiensis (strain G4 / LMG 22486) (Burkholderia cepacia (strain R1808)).